We begin with the raw amino-acid sequence, 423 residues long: Glycine amidinotransferase, mitochondrial (423 aa).

A mitochondrion-targeting transit peptide spans 1–43 (MLRVRCLRGGSRGAEALHYIGSRLGRTVTGWVQRTFQSTQAAT). Phosphoserine is present on residues serine 46 and serine 49. Aspartate 170 serves as a coordination point for arginine. Active-site residues include aspartate 254 and histidine 303. Residues aspartate 305, arginine 322, serine 354, and serine 355 each contribute to the arginine site. An N6-acetyllysine modification is found at lysine 385. Residue cysteine 407 is the Amidino-cysteine intermediate of the active site.

This sequence belongs to the amidinotransferase family. In terms of assembly, homodimer. Kidney. Expressed biallelically in placenta.

It is found in the mitochondrion inner membrane. The enzyme catalyses L-arginine + glycine = guanidinoacetate + L-ornithine. The catalysed reaction is 4-aminobutanoate + L-arginine = 4-guanidinobutanoate + L-ornithine. It carries out the reaction beta-alanine + L-arginine = 3-guanidinopropanoate + L-ornithine. It catalyses the reaction taurine + L-arginine = taurocyamine + L-ornithine. It functions in the pathway amine and polyamine biosynthesis; creatine biosynthesis; creatine from L-arginine and glycine: step 1/2. Transamidinase that catalyzes the transfer of the amidino group of L-arginine onto the amino moiety of acceptor metabolites such as glycine, beta-alanine, gamma-aminobutyric acid (GABA) and taurine yielding the corresponding guanidine derivatives. Catalyzes the rate-limiting step of creatine biosynthesis, namely the transfer of the amidino group from L-arginine to glycine to generate guanidinoacetate, which is then methylated by GAMT to form creatine. Provides creatine as a source for ATP generation in tissues with high energy demands, in particular skeletal muscle, heart and brain. This is Glycine amidinotransferase, mitochondrial (GATM) from Sus scrofa (Pig).